A 71-amino-acid polypeptide reads, in one-letter code: uncharacterized protein (71 aa).

Its subcellular location is the mitochondrion matrix. It is found in the kinetoplast. This is an uncharacterized protein from Trypanosoma brucei brucei.